Consider the following 156-residue polypeptide: 6,7-dimethyl-8-ribityllumazine synthase (156 aa).

5-amino-6-(D-ribitylamino)uracil contacts are provided by residues phenylalanine 22, 56 to 58 (AFE), and 80 to 82 (AVI). Position 85 to 86 (85 to 86 (ST)) interacts with (2S)-2-hydroxy-3-oxobutyl phosphate. Histidine 88 (proton donor) is an active-site residue. 5-amino-6-(D-ribitylamino)uracil is bound at residue phenylalanine 113. Residue arginine 127 coordinates (2S)-2-hydroxy-3-oxobutyl phosphate.

Belongs to the DMRL synthase family.

The catalysed reaction is (2S)-2-hydroxy-3-oxobutyl phosphate + 5-amino-6-(D-ribitylamino)uracil = 6,7-dimethyl-8-(1-D-ribityl)lumazine + phosphate + 2 H2O + H(+). The protein operates within cofactor biosynthesis; riboflavin biosynthesis; riboflavin from 2-hydroxy-3-oxobutyl phosphate and 5-amino-6-(D-ribitylamino)uracil: step 1/2. Catalyzes the formation of 6,7-dimethyl-8-ribityllumazine by condensation of 5-amino-6-(D-ribitylamino)uracil with 3,4-dihydroxy-2-butanone 4-phosphate. This is the penultimate step in the biosynthesis of riboflavin. This Caldicellulosiruptor saccharolyticus (strain ATCC 43494 / DSM 8903 / Tp8T 6331) protein is 6,7-dimethyl-8-ribityllumazine synthase.